The chain runs to 592 residues: Pyruvate decarboxylase 3 (592 aa).

Residues Asp-54 and His-141 each contribute to the substrate site. Residues 419–501 form a thiamine pyrophosphate binding region; the sequence is DSWFNCQKLK…FLINNGGYTI (83 aa). Residues Asp-469, Asn-496, and Gly-498 each coordinate Mg(2+). Glu-502 is a substrate binding site.

It belongs to the TPP enzyme family. As to quaternary structure, homotetramer. A metal cation serves as cofactor. It depends on thiamine diphosphate as a cofactor. As to expression, expressed at low levels in roots and shoots.

The enzyme catalyses a 2-oxocarboxylate + H(+) = an aldehyde + CO2. This chain is Pyruvate decarboxylase 3 (PDC3), found in Arabidopsis thaliana (Mouse-ear cress).